Here is an 86-residue protein sequence, read N- to C-terminus: MDAFDVIKTPIVSEKTMKLIEEENRLVFYVERKATKADIRAAIKELFDAEVADINTSITPKGKKKAYITLKAEYNAGEVAASLGIY.

The protein belongs to the universal ribosomal protein uL23 family. Part of the 50S ribosomal subunit. Contacts protein L29.

Binds to 23S rRNA. One of the proteins that surrounds the polypeptide exit tunnel on the outside of the ribosome. The polypeptide is Large ribosomal subunit protein uL23 (Methanococcus maripaludis (strain C5 / ATCC BAA-1333)).